We begin with the raw amino-acid sequence, 122 residues long: MIQEQTILHVADNSGARSAMCIKVLGGSRRRYAAIGDVIKITIKEAIPRGKVKKGEVLKAVVVRTKKGVRRSDGSVIRFDTNACVVLNNNEQPIGTRIFGPVTRELRTEKFMKIISLAPEVL.

It belongs to the universal ribosomal protein uL14 family. As to quaternary structure, part of the 50S ribosomal subunit. Forms a cluster with proteins L3 and L19. In the 70S ribosome, L14 and L19 interact and together make contacts with the 16S rRNA in bridges B5 and B8.

Functionally, binds to 23S rRNA. Forms part of two intersubunit bridges in the 70S ribosome. The sequence is that of Large ribosomal subunit protein uL14 from Buchnera aphidicola subsp. Acyrthosiphon pisum (strain 5A).